The sequence spans 66 residues: Gallinacin-5 (66 aa).

The first 19 residues, 1–19 (MQILTLLFAVLLLMLRAEP), serve as a signal peptide directing secretion. The propeptide occupies 20–25 (GLSLAR). 3 disulfides stabilise this stretch: Cys31–Cys59, Cys38–Cys53, and Cys43–Cys60.

This sequence belongs to the beta-defensin family. Strong expression in the tongue and bone marrow. Low expression in the esophagus, trachea, lung, brain and ovary. Expressed in the ovarian stroma, but not in the ovarian follicles.

It is found in the secreted. It localises to the cytoplasmic granule. Functionally, has bactericidal activity. The polypeptide is Gallinacin-5 (GAL5) (Gallus gallus (Chicken)).